The sequence spans 129 residues: Nif-specific regulatory protein (129 aa).

One can recognise a Sigma-54 factor interaction domain in the interval 1 to 46; that stretch reads EFLLTKIGRQQGRPLTVTDSAIRLLMSHRWPGNVRDVENCLERSAI. The segment at residues 101–129 is a DNA-binding region (H-T-H motif); it reads QAKAARLLGMTPRQIAYRIQTLNIHMRKI.

Interacts with sigma-54.

Its function is as follows. Required for activation of most nif operons, which are directly involved in nitrogen fixation. This Azotobacter chroococcum mcd 1 protein is Nif-specific regulatory protein (nifA).